The primary structure comprises 599 residues: Leishmanolysin (599 aa).

A signal peptide spans 1-39 (MSVDSSSTHRHRSVAARLVRLAAAGAAVIAAVGTAAAWA). A propeptide spans 40–97 (HAGAVQHRCIHDAMQARVRQSVARHHTAPGAVSAVGLPYVTLDTAAAADRRPGSAPTV) (activation peptide). Disulfide bonds link Cys122–Cys139 and Cys188–Cys227. His261 contributes to the Zn(2+) binding site. Glu262 is a catalytic residue. His265 is a binding site for Zn(2+). N-linked (GlcNAc...) asparagine glycosylation occurs at Asn297. 7 cysteine pairs are disulfide-bonded: Cys311-Cys383, Cys390-Cys452, Cys403-Cys422, Cys412-Cys486, Cys463-Cys507, Cys512-Cys562, and Cys532-Cys555. His331 contacts Zn(2+). Residue Asn394 is glycosylated (N-linked (GlcNAc...) asparagine). A lipid anchor (GPI-anchor amidated asparagine) is attached at Asn574. Residues 575–599 (AAAGRRGPRAAATALLVAALLAVAL) constitute a propeptide, removed in mature form.

The protein belongs to the peptidase M8 family. It depends on Zn(2+) as a cofactor.

It localises to the cell membrane. It carries out the reaction Preference for hydrophobic residues at P1 and P1' and basic residues at P2' and P3'. A model nonapeptide is cleaved at -Ala-Tyr-|-Leu-Lys-Lys-.. In terms of biological role, has an integral role during the infection of macrophages in the mammalian host. In Leishmania chagasi, this protein is Leishmanolysin (gp63).